The following is a 349-amino-acid chain: Small ribosomal subunit protein uS2 (349 aa).

This sequence belongs to the universal ribosomal protein uS2 family.

The polypeptide is Small ribosomal subunit protein uS2 (Methylobacterium nodulans (strain LMG 21967 / CNCM I-2342 / ORS 2060)).